A 113-amino-acid polypeptide reads, in one-letter code: UPF0145 protein MTH_544 (113 aa).

This sequence belongs to the UPF0145 family.

The polypeptide is UPF0145 protein MTH_544 (Methanothermobacter thermautotrophicus (strain ATCC 29096 / DSM 1053 / JCM 10044 / NBRC 100330 / Delta H) (Methanobacterium thermoautotrophicum)).